The chain runs to 87 residues: uncharacterized protein (87 aa).

The tract at residues 67–87 is disordered; the sequence is TGGDPREAVVRPADQVEGYTG.

This is an uncharacterized protein from Mycobacterium bovis (strain ATCC BAA-935 / AF2122/97).